The primary structure comprises 907 residues: Androgen receptor (907 aa).

Residues 1-545 (MEVQLGLGRV…PIDYYFPPQK (545 aa)) form a modulating region. Positions 1–574 (MEVQLGLGRV…GSCKVFFKRA (574 aa)) are interaction with ZNF318. Disordered stretches follow at residues 36–152 (NPGP…LSLL) and 200–231 (QQQE…YLGG). Positions 55–76 (QQQQQQQQQQETSPRQQQQQQQ) are enriched in low complexity. Ser67 is modified (phosphoserine; by CDK9). Ser81 is subject to Phosphoserine. Over residues 123 to 134 (TSATGKGLQQQQ) the composition is skewed to polar residues. Low complexity predominate over residues 200 to 224 (QQQEVVSEGSSSGRAREAAGASTSS). Phosphotyrosine; by CSK is present on Tyr228. A Phosphoserine modification is found at Ser261. Tyr272 is subject to Phosphotyrosine; by CSK and TNK2. Phosphotyrosine; by CSK occurs at positions 310, 349, 360, and 365. At Tyr366 the chain carries Phosphotyrosine; by CSK and TNK2. Lys389 participates in a covalent cross-link: Glycyl lysine isopeptide (Lys-Gly) (interchain with G-Cter in SUMO). Tyr396 carries the phosphotyrosine; by CSK modification. Lys508 participates in a covalent cross-link: Glycyl lysine isopeptide (Lys-Gly) (interchain with G-Cter in SUMO). Tyr522 and Tyr539 each carry phosphotyrosine; by CSK. Residues 539–906 (YYFPPQKTCL…GKVKPIYFHT (368 aa)) are interaction with LPXN. A DNA-binding region (nuclear receptor) is located at residues 546-619 (TCLICGDEAS…AGMTLGARKL (74 aa)). 2 consecutive NR C4-type zinc fingers follow at residues 547-567 (CLIC…CGSC) and 583-607 (CASR…LRKC). The tract at residues 559–649 (YGALTCGSCK…TEEPTQKLTV (91 aa)) is interaction with HIPK3. Positions 579-906 (QKYLCASRND…GKVKPIYFHT (328 aa)) are interaction with CCAR1. The interval 612–906 (MTLGARKLKK…GKVKPIYFHT (295 aa)) is interaction with KAT7. Ser638 carries the post-translational modification Phosphoserine; by STK4/MST1. The 232-residue stretch at 656–887 (ECQPIFLNVL…DFPEMMAEII (232 aa)) folds into the NR LBD domain. 17beta-hydroxy-5alpha-androstan-3-one contacts are provided by Asn693 and Arg740. Glycyl lysine isopeptide (Lys-Gly) (interchain with G-Cter in ubiquitin) cross-links involve residues Lys833 and Lys835. 17beta-hydroxy-5alpha-androstan-3-one is bound at residue Thr865. At Tyr903 the chain carries Phosphotyrosine; by CSK.

This sequence belongs to the nuclear hormone receptor family. NR3 subfamily. Binds DNA as a homodimer. Part of a ternary complex containing AR, EFCAB6/DJBP and PARK7. Interacts with HIPK3 and NR0B2 in the presence of androgen. The ligand binding domain interacts with KAT7/HBO1 in the presence of dihydrotestosterone. Interacts with EFCAB6/DJBP, PQBP1, RANBP9, RBAK, SPDEF, SRA1, TGFB1I1 and RREB1. Interacts with ZMIZ1/ZIMP10 and ZMIZ2/ZMIP7 which both enhance its transactivation activity. Interacts with SLC30A9 and RAD54L2/ARIP4. Interacts with MACROD1 (via macro domain). Interacts via the ligand-binding domain with LXXLL and FXXLF motifs from NCOA1, NCOA2, NCOA3 and MAGEA11. Interacts (via nuclear receptor DNA binding domain and nuclear receptor ligand binding domain) with NCOA4. The AR N-terminal poly-Gln region binds Ran resulting in enhancement of AR-mediated transactivation. Ran-binding decreases as the poly-Gln length increases. Interacts with HIP1 (via coiled coil domain). Interacts (via ligand-binding domain) with TRIM68. Interacts with TNK2. Interacts with USP26. Interacts with RNF6. Interacts (regulated by RNF6 probably through polyubiquitination) with RNF14; regulates AR transcriptional activity. Interacts with PRMT2 and TRIM24. Interacts with RACK1. Interacts with RANBP10; this interaction enhances dihydrotestosterone-induced AR transcriptional activity. Interacts with PRPF6 in a hormone-independent way; this interaction enhances dihydrotestosterone-induced AR transcriptional activity. Interacts with STK4/MST1. Interacts with ZIPK/DAPK3. Interacts with LPXN. Interacts with MAK. Part of a complex containing AR, MAK and NCOA3. Interacts with CRY1. Interacts with CCAR1 and GATA2. Interacts with ZNF318. Interacts with BUD31. Interacts with ARID4A. Interacts with ARID4B. Interacts (via NR LBD domain) with ZBTB7A; the interaction is direct and androgen-dependent. Interacts with NCOR1. Interacts with NCOR2. Interacts witH CRY2 in a ligand-dependent manner. In terms of processing, phosphorylated in prostate cancer cells in response to several growth factors including EGF. Phosphorylation is induced by c-Src kinase (CSK). Tyr-522 is one of the major phosphorylation sites and an increase in phosphorylation and Src kinase activity is associated with prostate cancer progression. Phosphorylation by TNK2 enhances the DNA-binding and transcriptional activity. Phosphorylation at Ser-67 by CDK9 regulates AR promoter selectivity and cell growth. Post-translationally, sumoylated on Lys-389 (major) and Lys-508. Ubiquitinated. Deubiquitinated by USP26. 'Lys-6' and 'Lys-27'-linked polyubiquitination by RNF6 modulates AR transcriptional activity and specificity. Palmitoylated by ZDHHC7 and ZDHHC21. Palmitoylation is required for plasma membrane targeting and for rapid intracellular signaling via ERK and AKT kinases and cAMP generation.

It is found in the nucleus. Its subcellular location is the cytoplasm. Its function is as follows. Steroid hormone receptors are ligand-activated transcription factors that regulate eukaryotic gene expression and affect cellular proliferation and differentiation in target tissues. Transcription factor activity is modulated by bound coactivator and corepressor proteins like ZBTB7A that recruits NCOR1 and NCOR2 to the androgen response elements/ARE on target genes, negatively regulating androgen receptor signaling and androgen-induced cell proliferation. Transcription activation is also down-regulated by NR0B2. Activated, but not phosphorylated, by HIPK3 and ZIPK/DAPK3. This Canis lupus familiaris (Dog) protein is Androgen receptor (AR).